Reading from the N-terminus, the 179-residue chain is Large ribosomal subunit protein uL6 (179 aa).

It belongs to the universal ribosomal protein uL6 family. As to quaternary structure, part of the 50S ribosomal subunit.

Functionally, this protein binds to the 23S rRNA, and is important in its secondary structure. It is located near the subunit interface in the base of the L7/L12 stalk, and near the tRNA binding site of the peptidyltransferase center. This chain is Large ribosomal subunit protein uL6, found in Syntrophus aciditrophicus (strain SB).